The chain runs to 1429 residues: Probable ATP-dependent RNA helicase spindle-E (1429 aa).

One can recognise a Helicase ATP-binding domain in the interval Val121–Val288. Gly134–Thr141 serves as a coordination point for ATP. The short motif at Asp234 to His237 is the DEAH box element. Residues Gln349–Asp521 enclose the Helicase C-terminal domain. The region spanning Ala933–Gln996 is the Tudor domain.

It belongs to the DEAD box helicase family. DEAH subfamily.

The protein resides in the cytoplasm. The enzyme catalyses ATP + H2O = ADP + phosphate + H(+). In terms of biological role, probable ATP-binding RNA helicase which plays a central role during spermatogenesis and oogenesis by repressing transposable elements and preventing their mobilization, which is essential for the germline integrity. Acts via the piRNA metabolic process, which mediates the repression of transposable elements during meiosis by forming complexes composed of piRNAs and Piwi and govern the methylation and subsequent repression of transposons. Involved in the repression of LTR retrotransposon copia. Also involved in telomere regulation by repressing specialized telomeric retroelements HeT-A, TAHRE, and TART; Drosophila telomeres being maintained by transposition of specialized telomeric retroelements. Involved in telomeric trans-silencing, a repression mechanism by which a transposon or a transgene inserted in subtelomeric heterochromatin has the capacity to repress in trans in the female germline, a homologous transposon, or transgene located in euchromatin. Involved in the repression of testis-expressed Stellate genes by the homologous Su(Ste) repeats. Required for anteroposterior and dorsoventral axis formation during oogenesis. This Drosophila ananassae (Fruit fly) protein is Probable ATP-dependent RNA helicase spindle-E (spn-E).